The chain runs to 311 residues: tRNA dimethylallyltransferase (311 aa).

13–20 (GPTASGKT) provides a ligand contact to ATP. A substrate-binding site is contributed by 15-20 (TASGKT). 2 interaction with substrate tRNA regions span residues 38–41 (DSMQ) and 166–170 (QRVLR).

It belongs to the IPP transferase family. Monomer. Mg(2+) is required as a cofactor.

The enzyme catalyses adenosine(37) in tRNA + dimethylallyl diphosphate = N(6)-dimethylallyladenosine(37) in tRNA + diphosphate. Its function is as follows. Catalyzes the transfer of a dimethylallyl group onto the adenine at position 37 in tRNAs that read codons beginning with uridine, leading to the formation of N6-(dimethylallyl)adenosine (i(6)A). The polypeptide is tRNA dimethylallyltransferase (Staphylococcus aureus (strain Mu3 / ATCC 700698)).